A 588-amino-acid chain; its full sequence is Aspartate--tRNA ligase (588 aa).

Glu-177 serves as a coordination point for L-aspartate. The segment at 201-204 (QLFK) is aspartate. L-aspartate is bound at residue Arg-223. ATP-binding positions include 223–225 (RDE) and Gln-232. His-451 provides a ligand contact to L-aspartate. An ATP-binding site is contributed by Glu-485. Arg-492 is a binding site for L-aspartate. 537–540 (GLDR) provides a ligand contact to ATP.

Belongs to the class-II aminoacyl-tRNA synthetase family. Type 1 subfamily. As to quaternary structure, homodimer.

Its subcellular location is the cytoplasm. The catalysed reaction is tRNA(Asp) + L-aspartate + ATP = L-aspartyl-tRNA(Asp) + AMP + diphosphate. Its function is as follows. Catalyzes the attachment of L-aspartate to tRNA(Asp) in a two-step reaction: L-aspartate is first activated by ATP to form Asp-AMP and then transferred to the acceptor end of tRNA(Asp). In Staphylococcus aureus (strain MRSA252), this protein is Aspartate--tRNA ligase.